A 214-amino-acid polypeptide reads, in one-letter code: Methylthioribulose-1-phosphate dehydratase (214 aa).

Positions 103 and 105 each coordinate Zn(2+).

Belongs to the aldolase class II family. MtnB subfamily. The cofactor is Zn(2+).

It carries out the reaction 5-(methylsulfanyl)-D-ribulose 1-phosphate = 5-methylsulfanyl-2,3-dioxopentyl phosphate + H2O. The protein operates within amino-acid biosynthesis; L-methionine biosynthesis via salvage pathway; L-methionine from S-methyl-5-thio-alpha-D-ribose 1-phosphate: step 2/6. Functionally, catalyzes the dehydration of methylthioribulose-1-phosphate (MTRu-1-P) into 2,3-diketo-5-methylthiopentyl-1-phosphate (DK-MTP-1-P). The chain is Methylthioribulose-1-phosphate dehydratase from Granulibacter bethesdensis (strain ATCC BAA-1260 / CGDNIH1).